Here is a 169-residue protein sequence, read N- to C-terminus: RNA annealing protein YRA2 (169 aa).

An RRM domain is found at 45–119 (KRLRFTNVPL…GTVTVEIFEQ (75 aa)). Residues 119–169 (QERRPDRRRRTQRDNRRGNGRGSRGSHYKRQDRPAMEDELNAELEDYMKSS) form a disordered region.

Belongs to the YRA1 family. In terms of assembly, associates with mRNPs.

The protein resides in the nucleus. Involved in export of poly(A) mRNAs from the nucleus. Recruited to the coding sequences as well as poly-A sites of active genes. The chain is RNA annealing protein YRA2 (YRA2) from Zygosaccharomyces rouxii (strain ATCC 2623 / CBS 732 / NBRC 1130 / NCYC 568 / NRRL Y-229).